Consider the following 258-residue polypeptide: UPF0246 protein YaaA (258 aa).

Belongs to the UPF0246 family.

The sequence is that of UPF0246 protein YaaA from Escherichia coli (strain SE11).